We begin with the raw amino-acid sequence, 119 residues long: UPF0102 protein Nmul_A0195 (119 aa).

This sequence belongs to the UPF0102 family.

This is UPF0102 protein Nmul_A0195 from Nitrosospira multiformis (strain ATCC 25196 / NCIMB 11849 / C 71).